Here is a 623-residue protein sequence, read N- to C-terminus: MLAWRPGRPDGCRAAGGRRYNPGHDCIKASVSLNSAARNAPAGSQPVKAELWKRVYSRVGSYWKGLVLAVLLMAGAAATQPTLAVIMKPLLDDGFSGAKPHYVWFLPLAVVGLILLRGICNFFSDYLLAWVANNVLRGIRGEMFERLLGLPDADFKRGDTGRLLNRFTIDAGNVTGYATDVITVLVRETLVVIALIGVLLYMSWALTLIILVMLPVSVGIARAFTRRLRRINRETVNMNAELTRVVSEGIDGQRVIKLFDGYDAERRRFDFVNSRLRRFAMRSATADAALTPLTQVCISVAVGAVIAVALSQANSGALTVGSFASFMAALAQIFDPIKRLTNLAGKMQKMLVAAESVFTLVDQTPEADAGTRALPEPVRGKVEFRAVSHRFPDADRDTVSAVSFLVEPGQTVALVGRSGSGKTTLVNMLPRFVLPDGGDILFDDVPIQDLTLRSLRSHLSLVSQDVVLFDDTIAANVGYGAGGTVDDARVRDALAAANLLEFVDGLPLGIHTPVGQNAARLSGGQRQRLAIARALIKNAPVLILDEATSALDNESERQVQASLERLMRGRTTLVIAHRLSTVQNADRIIVLDAGKIVEHGPHSELLAANGLYASLYNMQFRED.

A run of 5 helical transmembrane segments spans residues 66–86 (LVLA…LAVI), 103–123 (VWFL…CNFF), 190–210 (LVVI…TLII), 290–310 (LTPL…AVAL), and 317–337 (ALTV…FDPI). Residues 67 to 349 (VLAVLLMAGA…LTNLAGKMQK (283 aa)) enclose the ABC transmembrane type-1 domain. Residues 382-618 (VEFRAVSHRF…NGLYASLYNM (237 aa)) form the ABC transporter domain. 416-423 (GRSGSGKT) is an ATP binding site.

Belongs to the ABC transporter superfamily. Lipid exporter (TC 3.A.1.106) family. Homodimer.

The protein localises to the cell inner membrane. It carries out the reaction ATP + H2O + lipid A-core oligosaccharideSide 1 = ADP + phosphate + lipid A-core oligosaccharideSide 2.. In terms of biological role, involved in lipopolysaccharide (LPS) biosynthesis. Translocates lipid A-core from the inner to the outer leaflet of the inner membrane. Transmembrane domains (TMD) form a pore in the inner membrane and the ATP-binding domain (NBD) is responsible for energy generation. In Bordetella bronchiseptica (strain ATCC BAA-588 / NCTC 13252 / RB50) (Alcaligenes bronchisepticus), this protein is ATP-dependent lipid A-core flippase.